The primary structure comprises 150 residues: uncharacterized protein (150 aa).

This is an uncharacterized protein from Mycoplasma pneumoniae (strain ATCC 29342 / M129 / Subtype 1) (Mycoplasmoides pneumoniae).